The following is a 235-amino-acid chain: MNKVTLLHEGKAKKVWQTDNPDLIIQEFKDDATAFNNKKKGSIADKGVTNNAIASRLFTMLGENGIPTHFVGKLNDRDMLCKKLDILLIEVVTRNIAAGSLVRRYGFKEGTVLSKPIVELYLKNDELDDPLMNEDHAVALGLGTCEEVAHLKAMAKKINSLLVPWFAERKLRLVDFKLEFGRHKGEILLGDEISPDTCRFWDAESGEKLDKDRFRLDLGGVEDAYSEVKRRVLEQ.

The protein belongs to the SAICAR synthetase family.

The enzyme catalyses 5-amino-1-(5-phospho-D-ribosyl)imidazole-4-carboxylate + L-aspartate + ATP = (2S)-2-[5-amino-1-(5-phospho-beta-D-ribosyl)imidazole-4-carboxamido]succinate + ADP + phosphate + 2 H(+). It participates in purine metabolism; IMP biosynthesis via de novo pathway; 5-amino-1-(5-phospho-D-ribosyl)imidazole-4-carboxamide from 5-amino-1-(5-phospho-D-ribosyl)imidazole-4-carboxylate: step 1/2. In Chlorobaculum tepidum (strain ATCC 49652 / DSM 12025 / NBRC 103806 / TLS) (Chlorobium tepidum), this protein is Phosphoribosylaminoimidazole-succinocarboxamide synthase.